Here is a 155-residue protein sequence, read N- to C-terminus: SsrA-binding protein (155 aa).

This sequence belongs to the SmpB family.

The protein localises to the cytoplasm. Required for rescue of stalled ribosomes mediated by trans-translation. Binds to transfer-messenger RNA (tmRNA), required for stable association of tmRNA with ribosomes. tmRNA and SmpB together mimic tRNA shape, replacing the anticodon stem-loop with SmpB. tmRNA is encoded by the ssrA gene; the 2 termini fold to resemble tRNA(Ala) and it encodes a 'tag peptide', a short internal open reading frame. During trans-translation Ala-aminoacylated tmRNA acts like a tRNA, entering the A-site of stalled ribosomes, displacing the stalled mRNA. The ribosome then switches to translate the ORF on the tmRNA; the nascent peptide is terminated with the 'tag peptide' encoded by the tmRNA and targeted for degradation. The ribosome is freed to recommence translation, which seems to be the essential function of trans-translation. The sequence is that of SsrA-binding protein from Bacillus cereus (strain 03BB102).